A 513-amino-acid polypeptide reads, in one-letter code: Teichoic acid ribitol-phosphate polymerase TarK (513 aa).

The protein belongs to the CDP-glycerol glycerophosphotransferase family.

The protein resides in the cell membrane. The enzyme catalyses 4-O-[di(2R)-glycerylphospho]-N-acetyl-beta-D-mannosaminyl-(1-&gt;4)-N-acetyl-alpha-D-glucosaminyl di-trans,octa-cis-undecaprenyl diphosphate + n CDP-L-ribitol = 4-O-[(D-ribitylphospho)(n)-di{(2R)-glycerylphospho}]-N-acetyl-beta-D-mannosaminyl-(1-&gt;4)-N-acetyl-alpha-D-glucosaminyl di-trans,octa-cis-undecaprenyl diphosphate + n CMP + n H(+). It participates in cell wall biogenesis; poly(ribitol phosphate) teichoic acid biosynthesis. Can catalyze the polymerization of the main chain of the major teichoic acid by sequential transfer of ribitol phosphate units from CDP-ribitol to the second glycerol phosphate attached to the disaccharide linkage unit. This chain is Teichoic acid ribitol-phosphate polymerase TarK (tarK), found in Staphylococcus aureus (strain NCTC 8325 / PS 47).